We begin with the raw amino-acid sequence, 199 residues long: Peroxynitrite isomerase (199 aa).

The short motif at 20–26 is the GXWXGXG element; sequence GVWEGTG. Position 190 (His-190) interacts with heme b.

It belongs to the nitrobindin family. In terms of assembly, homodimer. Heme b serves as cofactor.

The enzyme catalyses peroxynitrite = nitrate. The protein operates within nitrogen metabolism. Heme-binding protein able to scavenge peroxynitrite and to protect free L-tyrosine against peroxynitrite-mediated nitration, by acting as a peroxynitrite isomerase that converts peroxynitrite to nitrate. Therefore, this protein likely plays a role in peroxynitrite sensing and in the detoxification of reactive nitrogen and oxygen species (RNS and ROS, respectively). Is able to bind nitric oxide (NO) in vitro, but may act as a sensor of peroxynitrite levels in vivo. This chain is Peroxynitrite isomerase, found in Clavibacter michiganensis subsp. michiganensis (strain NCPPB 382).